Consider the following 415-residue polypeptide: Gamma-glutamyl phosphate reductase (415 aa).

The protein belongs to the gamma-glutamyl phosphate reductase family.

It localises to the cytoplasm. It carries out the reaction L-glutamate 5-semialdehyde + phosphate + NADP(+) = L-glutamyl 5-phosphate + NADPH + H(+). Its pathway is amino-acid biosynthesis; L-proline biosynthesis; L-glutamate 5-semialdehyde from L-glutamate: step 2/2. Its function is as follows. Catalyzes the NADPH-dependent reduction of L-glutamate 5-phosphate into L-glutamate 5-semialdehyde and phosphate. The product spontaneously undergoes cyclization to form 1-pyrroline-5-carboxylate. This chain is Gamma-glutamyl phosphate reductase, found in Bacteroides fragilis (strain YCH46).